The chain runs to 316 residues: Ribosomal RNA small subunit methyltransferase H (316 aa).

Residues 42 to 44, D62, F86, D104, and Q111 contribute to the S-adenosyl-L-methionine site; that span reads GGH.

It belongs to the methyltransferase superfamily. RsmH family.

The protein resides in the cytoplasm. The catalysed reaction is cytidine(1402) in 16S rRNA + S-adenosyl-L-methionine = N(4)-methylcytidine(1402) in 16S rRNA + S-adenosyl-L-homocysteine + H(+). Functionally, specifically methylates the N4 position of cytidine in position 1402 (C1402) of 16S rRNA. The sequence is that of Ribosomal RNA small subunit methyltransferase H from Polynucleobacter necessarius subsp. necessarius (strain STIR1).